The following is a 126-amino-acid chain: Penton protein P31 (126 aa).

The protein resides in the virion. Its function is as follows. In association with P2 and trimeric P5, forms the spike complexes located at the 5-fold vertices of the capsid. Essential for viral infectivity. This Acinetobacter calcoaceticus (Arthrobacter siderocapsulatus) protein is Penton protein P31 (XXXI).